A 793-amino-acid polypeptide reads, in one-letter code: MIKNHFQIQRLKKILAKVKSFESEMAGLTDAELRKKTQEFKERLAAGETLDDLLPEAYAVVREADKRVLGMFPYDVQVMGAIVLHEGNVAEMATGEGKTLTATMPLYLNALSGQGAMLVTTNTYLALRDAQEMGQVYRFLGLTIEAAVVADETENLTPKQKRLIYQADIVYTTNSALGFDYLIENLAENKDSQYLSPFNYVIIDEIDSILLDSAQVPLVISGAPRVQSNFYSIMDTFITTLKEEEDYHYDDEKNEVWLTSKGILAAESFLDLEHLFSKENQELVRHLNLALRAHKLYKKDKDYVVRQGDKEAEVVLLDRATGRLLEMTRLQGGQHQAIEAKEHVKLTEETRAMASITYQNLFRLFRKISGMTGTGKVVESEFMETYSMSVIKIPTNQPVIRQDLPDQLYQTLPEKVFASLDEVKHYHAQGNPLLIFTGSVEMSEIYSSLLLREGIAHNLLNANNAAREAQIIAESGQKGAVTVATSMAGRGTDIKLGPGVADLGGLVVIGTERMENQRIDLQIRGRSGRQGDPGISKFFISLEDDLLRKWGPDWLKKLYKDYSTEEVQQHPVQLGQRRFRRLVAKAQRASESSAKMSRRMTLEYAQCMKIQREITYAERNRLIQAEERIDEEISRVLSQVIHQAAYEQSYETRADLYRFILDHFSYHAERIPYDFDIYSPEKIAELLQDIAEQELQAKKAYLKSDKLFTHFQRVSVLKAIDENWVEQVDYLQQLKTALSGQHFSMKNPLVEYYQEAYDGFEYMKERMKQQIVKNLLMSELALNPKGEVIMYFP.

Residues Q77, 95-99, and D493 each bind ATP; that span reads GEGKT.

Belongs to the SecA family. Monomer and homodimer. Part of the essential Sec protein translocation apparatus which comprises SecA, SecYEG and auxiliary proteins SecDF. Other proteins may also be involved.

The protein resides in the cell membrane. It is found in the cytoplasm. It carries out the reaction ATP + H2O + cellular proteinSide 1 = ADP + phosphate + cellular proteinSide 2.. Its function is as follows. Part of the Sec protein translocase complex. Interacts with the SecYEG preprotein conducting channel. Has a central role in coupling the hydrolysis of ATP to the transfer of proteins into and across the cell membrane, serving as an ATP-driven molecular motor driving the stepwise translocation of polypeptide chains across the membrane. This chain is Protein translocase subunit SecA 2, found in Streptococcus sanguinis (strain SK36).